A 391-amino-acid chain; its full sequence is Multidrug resistance protein MdtL (391 aa).

The Cytoplasmic segment spans residues 1–3; the sequence is MSR. Residues 4 to 24 form a helical membrane-spanning segment; the sequence is FLICSFALVLLYPAGIDMYLV. The Periplasmic portion of the chain corresponds to 25–37; it reads GLPRIAADLNASE. Residues 38–58 traverse the membrane as a helical segment; it reads AQLHIAFSVYLAGMAAAMLFA. Over 59-75 the chain is Cytoplasmic; sequence GKMADRSGRKPVAIPGS. The helical transmembrane segment at 76 to 96 threads the bilayer; sequence ALFIIASVFCSLAETSTLFLA. Over 97 to 98 the chain is Periplasmic; sequence GR. A helical transmembrane segment spans residues 99-119; the sequence is FLQGLGAGCCYVVAFAILRDT. Over 120 to 130 the chain is Cytoplasmic; the sequence is LDDRRRAKVLS. Residues 131-151 traverse the membrane as a helical segment; that stretch reads LLNGITCIIPVLAPVLGHLIM. Over 152 to 157 the chain is Periplasmic; the sequence is LKFPWQ. The helical transmembrane segment at 158-178 threads the bilayer; sequence SLFWAMAMMGIAVLMLSLFIL. At 179-202 the chain is on the cytoplasmic side; that stretch reads KETRPASPAASDKPRENSESLLNR. A helical membrane pass occupies residues 203–222; sequence FFLSRVVITTLSVSVILTFV. The Periplasmic segment spans residues 223–244; that stretch reads NTSPVLLMEIMGFERGEYATIM. A helical transmembrane segment spans residues 245–265; that stretch reads ALTAGVSMTFSFSTPFALGIF. The Cytoplasmic segment spans residues 266–268; the sequence is KPR. The helical transmembrane segment at 269 to 289 threads the bilayer; that stretch reads TLMITSQVLFLAAGITLAVSP. The Periplasmic portion of the chain corresponds to 290 to 292; that stretch reads SHA. The helical transmembrane segment at 293 to 313 threads the bilayer; that stretch reads VSLFGITLICAGFSVGFGVAM. Residues 314 to 330 are Cytoplasmic-facing; sequence SQALGPFSLRAGVASST. A helical membrane pass occupies residues 331-351; that stretch reads LGIAQVCGSSLWIWLAAVVGI. Topologically, residues 352–355 are periplasmic; the sequence is GAWN. The helical transmembrane segment at 356-376 threads the bilayer; sequence MLIGILIACSIVSLLLIMFVA. Residues 377–391 are Cytoplasmic-facing; it reads PGRPVAAHEEIHHHA.

This sequence belongs to the major facilitator superfamily. DHA1 family. MdtL (TC 2.A.1.2.22) subfamily.

The protein resides in the cell inner membrane. In Shigella flexneri serotype 5b (strain 8401), this protein is Multidrug resistance protein MdtL.